The primary structure comprises 441 residues: Protein kinase C and casein kinase substrate in neurons protein 1 (441 aa).

Phosphoserine occurs at positions 2 and 76. The F-BAR domain maps to 10–280 (EEITDSFWEV…AIRGADAQED (271 aa)). Positions 23–272 (KRTVKRIDDG…HVYRELEQAI (250 aa)) form a coiled coil. At T181 the chain carries Phosphothreonine. Residues 297–380 (PQFEEWNPDL…ANGGANPFED (84 aa)) are disordered. Positions 311–321 (AKKEKQPKKAE) are enriched in basic and acidic residues. Residues 324 to 355 (TLSNATGAVESTSQAGDRGSVSSYDRGQTYAT) show a composition bias toward polar residues. Residues S343, S345, S346, S358, and S362 each carry the phosphoserine modification. Residues 382–441 (AKGVRVRALYDYDGQEQDELSFKAGDELTKLGEEDEQGWCRGRLDSGQLGLYPANYVEAI) form the SH3 domain. Y391 is subject to Phosphotyrosine. Phosphoserine is present on residues S402 and S427.

It belongs to the PACSIN family. In terms of assembly, homodimer. May form heterooligomers with other PACSINs. Interacts with both COBL and DBNL. Identified in a complex composed of COBL, PACSIN1 and WASL. Interacts with EHD3. Interacts (via SH3 domain) with SYNJ1 and WASL. Interacts (via SH3 domain) with DNM1; the interaction is reduced by DNM1 phosphorylation. Interacts with DNM2 and DNM3. Interacts with MAPT. Interacts with EHD1. Interacts with TRPV4. Post-translationally, phosphorylated by casein kinase 2 (CK2) and protein kinase C (PKC). Highly expressed in brain. Detected in hippocampus and dorsal root ganglion neurons. Detected in rod photoreceptor terminals in the outer plexiform layer of the retina (at protein level). In CNS neurons, high levels in the pyramidal cells of the hippocampus, Purkinje cells of the cerebellum and large neurons of the cortex and brain stem.

It localises to the cytoplasm. Its subcellular location is the cell projection. It is found in the synapse. The protein resides in the synaptosome. The protein localises to the ruffle membrane. It localises to the membrane. Its subcellular location is the cytoplasmic vesicle membrane. It is found in the cytosol. The protein resides in the cell membrane. Functionally, binds to membranes via its F-BAR domain and mediates membrane tubulation. Plays a role in the reorganization of the microtubule cytoskeleton via its interaction with MAPT; this decreases microtubule stability and inhibits MAPT-induced microtubule polymerization. Plays a role in cellular transport processes by recruiting DNM1, DNM2 and DNM3 to membranes. Plays a role in the reorganization of the actin cytoskeleton and in neuron morphogenesis via its interaction with COBL and WASL, and by recruiting COBL to the cell cortex. Plays a role in the regulation of neurite formation, neurite branching and the regulation of neurite length. Required for normal synaptic vesicle endocytosis; this process retrieves previously released neurotransmitters to accommodate multiple cycles of neurotransmission. Required for normal excitatory and inhibitory synaptic transmission. In Mus musculus (Mouse), this protein is Protein kinase C and casein kinase substrate in neurons protein 1 (Pacsin1).